Consider the following 167-residue polypeptide: Transmembrane protein 229B (167 aa).

Residues 1–14 lie on the Cytoplasmic side of the membrane; it reads MAAAEPLTAFSRWY. A helical membrane pass occupies residues 15–35; sequence LYAIHGYFCEVMFTAAWEFVV. Residues 36 to 40 are Extracellular-facing; that stretch reads NFNWK. The helical transmembrane segment at 41-61 threads the bilayer; the sequence is FPGVTSVWALFIYGTSILIVE. The Cytoplasmic segment spans residues 62-72; that stretch reads KMYLYLKDKCH. Residues 73 to 93 traverse the membrane as a helical segment; the sequence is ILVRCFIYTLWTYLWEFTTGL. Topologically, residues 94–109 are extracellular; that stretch reads ILRQFNACPWDYSQFD. Residues 110 to 130 form a helical membrane-spanning segment; it reads FDFMGLITLEYAIPWFCASFI. The Cytoplasmic segment spans residues 131-167; the sequence is MEQLVIRNTLRLRFDETAEPGAPTVPVALANGHVKTD.

The protein belongs to the TMEM229 family.

The protein resides in the membrane. The protein is Transmembrane protein 229B (TMEM229B) of Gallus gallus (Chicken).